Reading from the N-terminus, the 600-residue chain is CDK5RAP1-like protein (600 aa).

A disordered region spans residues 45–66 (LSSAAHPPPPPPRRLARSGPSR). The 130-residue stretch at 93 to 222 (GRIYHETYGC…LPRLLQEVDY (130 aa)) folds into the MTTase N-terminal domain. [4Fe-4S] cluster contacts are provided by cysteine 102, cysteine 139, cysteine 185, cysteine 260, cysteine 264, and cysteine 267. In terms of domain architecture, Radical SAM core spans 246-501 (SDNSVTAFVS…ISTFRETTAK (256 aa)). The 77-residue stretch at 504–580 (DSQVGTVQLV…TASLSGDVIA (77 aa)) folds into the TRAM domain.

Belongs to the methylthiotransferase family. MiaB subfamily. Requires [4Fe-4S] cluster as cofactor.

Potential regulator of CDK5 activity. This chain is CDK5RAP1-like protein, found in Oryza sativa subsp. japonica (Rice).